The sequence spans 492 residues: Probable malate:quinone oxidoreductase (492 aa).

Belongs to the MQO family. FAD serves as cofactor.

It carries out the reaction (S)-malate + a quinone = a quinol + oxaloacetate. It participates in carbohydrate metabolism; tricarboxylic acid cycle; oxaloacetate from (S)-malate (quinone route): step 1/1. The protein is Probable malate:quinone oxidoreductase of Methylobacillus flagellatus (strain ATCC 51484 / DSM 6875 / VKM B-1610 / KT).